We begin with the raw amino-acid sequence, 359 residues long: Src kinase-associated phosphoprotein 2 (359 aa).

3 positions are modified to phosphoserine: serine 5, serine 6, and serine 9. A homodimerization region spans residues 14–64 (PEEIRNLLADVETFVADILKGENLSKKAKEKRESLIKKIKDVKSIYLQEFQ). The disordered stretch occupies residues 66-88 (KGDAEDGEEYDDPFAGPPDTISL). Phosphotyrosine is present on tyrosine 75. 2 positions are modified to phosphoserine: serine 87 and serine 90. Residues 116 to 219 (FVLKAGYLEK…WVQQLKFVLQ (104 aa)) form the PH domain. 2 positions are modified to phosphotyrosine: tyrosine 151 and tyrosine 197. Serine 223 bears the Phosphoserine mark. Tyrosine 261 is modified (phosphotyrosine). The disordered stretch occupies residues 264-293 (LPEEEEDSAPVKVEEQRKMSQDSVHHTSGD). A compositionally biased stretch (basic and acidic residues) spans 275–293 (KVEEQRKMSQDSVHHTSGD). Phosphoserine occurs at positions 283 and 286. The region spanning 297 to 358 (DYANFYQGLW…PKAYIMEMYD (62 aa)) is the SH3 domain.

The protein belongs to the SKAP family. In terms of assembly, homodimer. Interacts with PTPNS1. Part of a complex consisting of SKAP2, FYB1 and PTPNS1. Part of a complex consisting of SKAP2, FYB1 and LILRB3. May interact with actin. Interacts with FYB1, which is required for SKAP2 protein stability. Interacts with LAT, GRB2, PTK2B and PRAM1. May interact with FYN, HCK and LYN. Interacts with FASLG. Post-translationally, phosphorylated in resting platelets. Phosphorylated by FYN on Tyr-261 upon T-cell activation. Dephosphorylated on Tyr-75 by PTPN22. In terms of tissue distribution, ubiquitously expressed. Present in platelets (at protein level).

Its subcellular location is the cytoplasm. Its function is as follows. May be involved in B-cell and macrophage adhesion processes. In B-cells, may act by coupling the B-cell receptor (BCR) to integrin activation. May play a role in src signaling pathway. The polypeptide is Src kinase-associated phosphoprotein 2 (SKAP2) (Homo sapiens (Human)).